Consider the following 383-residue polypeptide: DNA dC-&gt;dU-editing enzyme APOBEC-3G (383 aa).

The tract at residues 1–60 is essential for cytoplasmic localization; it reads MKPQFRNTVERMYRDTFFYNFNNRPILSRRNTVWLCYEVKTRGPSMPTWDAKIFRGQVYS. CMP/dCMP-type deaminase domains follow at residues 29–138 and 214–327; these read RRNT…LRVL and GQHE…LRTL. Thr32 carries the post-translational modification Phosphothreonine; by PKA. Zn(2+)-binding residues include His65, Cys97, and Cys100. Residues 209–335 are necessary for homooligomerization; it reads KPWVSGQHET…TLHRDGAKIA (127 aa). Residues 213 to 215 form an interaction with DNA region; that stretch reads SGQ. Thr218 bears the Phosphothreonine; by PKA and CAMK2 mark. Residue His257 coordinates Zn(2+). The active-site Proton donor is the Glu259. 2 residues coordinate Zn(2+): Cys287 and Cys290. The interaction with DNA stretch occupies residues 312 to 319; it reads RIYDDQGR.

Belongs to the cytidine and deoxycytidylate deaminase family. As to quaternary structure, homodimer. Zn(2+) serves as cofactor.

The protein localises to the cytoplasm. Its subcellular location is the nucleus. The protein resides in the P-body. It catalyses the reaction a 2'-deoxycytidine in single-stranded DNA + H2O + H(+) = a 2'-deoxyuridine in single-stranded DNA + NH4(+). DNA deaminase (cytidine deaminase) which acts as an inhibitor of retrovirus replication and retrotransposon mobility. After the penetration of retroviral nucleocapsids into target cells of infection and the initiation of reverse transcription, it can induce the conversion of cytosine to uracil in the minus-sense single-strand viral DNA, leading to G-to-A hypermutations in the subsequent plus-strand viral DNA. The resultant detrimental levels of mutations in the proviral genome, along with a deamination-independent mechanism that works prior to the proviral integration, together exert efficient antiretroviral effects in infected target cells. Selectively targets single-stranded DNA and does not deaminate double-stranded DNA or single- or double-stranded RNA. This chain is DNA dC-&gt;dU-editing enzyme APOBEC-3G (APOBEC3G), found in Papio anubis (Olive baboon).